A 472-amino-acid polypeptide reads, in one-letter code: Serine/threonine-protein kinase sax-1 (472 aa).

In terms of domain architecture, Protein kinase spans 87 to 381 (FESLKVIGRG…LDEIKQCPFF (295 aa)). ATP-binding positions include 93-101 (IGRGAFGEV) and lysine 116. Aspartate 210 (proton acceptor) is an active-site residue. The 71-residue stretch at 382-452 (RRIDWNHIRE…KRFDGLTQKM (71 aa)) folds into the AGC-kinase C-terminal domain.

This sequence belongs to the protein kinase superfamily. AGC Ser/Thr protein kinase family. Mg(2+) is required as a cofactor.

The protein localises to the cytoplasm. The protein resides in the nucleus. It carries out the reaction L-seryl-[protein] + ATP = O-phospho-L-seryl-[protein] + ADP + H(+). It catalyses the reaction L-threonyl-[protein] + ATP = O-phospho-L-threonyl-[protein] + ADP + H(+). Acts with sax-2 to restrict the growth of both primary and secondary neurites. Regulates mechanosensory tiling by controlling the termination point of sensory dendrites. This Caenorhabditis briggsae protein is Serine/threonine-protein kinase sax-1.